Reading from the N-terminus, the 876-residue chain is Valine--tRNA ligase (876 aa).

Positions 44–54 (PNVTGKLHLGH) match the 'HIGH' region motif. A 'KMSKS' region motif is present at residues 520–524 (KMSKS). Position 523 (lysine 523) interacts with ATP. Positions 805-876 (LEGLIDMDKE…VKARIEQLKA (72 aa)) form a coiled coil.

It belongs to the class-I aminoacyl-tRNA synthetase family. ValS type 1 subfamily. In terms of assembly, monomer.

It is found in the cytoplasm. The enzyme catalyses tRNA(Val) + L-valine + ATP = L-valyl-tRNA(Val) + AMP + diphosphate. Its function is as follows. Catalyzes the attachment of valine to tRNA(Val). As ValRS can inadvertently accommodate and process structurally similar amino acids such as threonine, to avoid such errors, it has a 'posttransfer' editing activity that hydrolyzes mischarged Thr-tRNA(Val) in a tRNA-dependent manner. This is Valine--tRNA ligase from Staphylococcus aureus (strain MRSA252).